An 887-amino-acid polypeptide reads, in one-letter code: Fibroblast growth factor receptor 2 (887 aa).

The N-terminal stretch at 1–18 (MLNKFIVIVTMLAMWNYA) is a signal peptide. Residues 19–416 (QDCNFELSKN…KDCVGNSYFT (398 aa)) are Extracellular-facing. Ig-like C2-type domains lie at 22–115 (NFEL…EFIS) and 180–260 (VSGS…LRMK). N-linked (GlcNAc...) asparagine glycosylation is found at N28, N74, N93, N230, N261, N268, N328, N334, and N364. The cysteines at positions 43 and 104 are disulfide-linked. The Ig-like C2-type 3 domain occupies 297–387 (FNLNSRVCIN…YACRIINFKD (91 aa)). C313 and C380 are joined by a disulfide. Residues 417–437 (IIWYSISVGIIILVVISFLII) traverse the membrane as a helical segment. Residues 438 to 887 (RLYNKYSNGY…SNQCYSTTIV (450 aa)) lie on the Cytoplasmic side of the membrane. The Protein kinase domain maps to 585 to 862 (LIIGSKIGEG…IIDKLTHIQL (278 aa)). ATP-binding positions include 591-599 (IGEGAFGIV) and K619. The Proton acceptor role is filled by D728. A Phosphotyrosine; by autocatalysis modification is found at Y757.

The protein belongs to the protein kinase superfamily. Tyr protein kinase family. Fibroblast growth factor receptor subfamily. As to expression, expressed in brain, stem cells and the mesenchymal cells.

It is found in the membrane. The enzyme catalyses L-tyrosyl-[protein] + ATP = O-phospho-L-tyrosyl-[protein] + ADP + H(+). Receptor for basic fibroblast growth factor. The chain is Fibroblast growth factor receptor 2 (FGFR2) from Dugesia japonica (Planarian).